The following is a 101-amino-acid chain: Protein Tat (101 aa).

An interaction with human CREBBP region spans residues 1–24; sequence MDPVDPNLEPWNHPGSQPKTPCNK. The transactivation stretch occupies residues 1–48; it reads MDPVDPNLEPWNHPGSQPKTPCNKCFCKVCCWHCQVCFLNKGLGISYG. 3 residues coordinate Zn(2+): C22, C25, and C27. The interval 22 to 37 is cysteine-rich; that stretch reads CNKCFCKVCCWHCQVC. Residue K28 is modified to N6-acetyllysine; by host PCAF. Zn(2+) is bound by residues C30, H33, C34, and C37. A core region spans residues 38-48; the sequence is FLNKGLGISYG. Over residues 48–57 the composition is skewed to basic residues; that stretch reads GRKKRKHRRG. The interval 48 to 101 is disordered; sequence GRKKRKHRRGTPQSSKGHQDPVPKQPLPTTRGNPTGPKESKKEVASKAEADQCD. A Nuclear localization signal, RNA-binding (TAR), and protein transduction motif is present at residues 49-57; it reads RKKRKHRRG. The interval 49 to 86 is interaction with the host capping enzyme RNGTT; that stretch reads RKKRKHRRGTPQSSKGHQDPVPKQPLPTTRGNPTGPKE. N6-acetyllysine; by host EP300 and GCN5L2 is present on residues K50 and K51. Asymmetric dimethylarginine; by host PRMT6 is present on R52. Residue K71 forms a Glycyl lysine isopeptide (Lys-Gly) (interchain with G-Cter in ubiquitin) linkage. Residues 85–101 show a composition bias toward basic and acidic residues; that stretch reads KESKKEVASKAEADQCD.

Belongs to the lentiviruses Tat family. In terms of assembly, interacts with host CCNT1. Associates with the P-TEFb complex composed at least of Tat, P-TEFb (CDK9 and CCNT1), TAR RNA, RNA Pol II. Recruits the HATs CREBBP, TAF1/TFIID, EP300, PCAF and GCN5L2. Interacts with host KAT5/Tip60; this interaction targets the latter to degradation. Interacts with the host deacetylase SIRT1. Interacts with host capping enzyme RNGTT; this interaction stimulates RNGTT. Binds to host KDR, and to the host integrins ITGAV/ITGB3 and ITGA5/ITGB1. Interacts with host KPNB1/importin beta-1 without previous binding to KPNA1/importin alpha-1. Interacts with EIF2AK2. Interacts with host nucleosome assembly protein NAP1L1; this interaction may be required for the transport of Tat within the nucleus, since the two proteins interact at the nuclear rim. Interacts with host C1QBP/SF2P32; this interaction involves lysine-acetylated Tat. Interacts with the host chemokine receptors CCR2, CCR3 and CXCR4. Interacts with host DPP4/CD26; this interaction may trigger an anti-proliferative effect. Interacts with host LDLR. Interacts with the host extracellular matrix metalloproteinase MMP1. Interacts with host PRMT6; this interaction mediates Tat's methylation. Interacts with, and is ubiquitinated by MDM2/Hdm2. Interacts with host PSMC3 and HTATIP2. Interacts with STAB1; this interaction may overcome SATB1-mediated repression of IL2 and IL2RA (interleukin) in T cells by binding to the same domain than HDAC1. Interacts (when acetylated) with human CDK13, thereby increasing HIV-1 mRNA splicing and promoting the production of the doubly spliced HIV-1 protein Nef. Interacts with host TBP; this interaction modulates the activity of transcriptional pre-initiation complex. Interacts with host RELA. Interacts with host PLSCR1; this interaction negatively regulates Tat transactivation activity by altering its subcellular distribution. In terms of processing, asymmetrical arginine methylation by host PRMT6 seems to diminish the transactivation capacity of Tat and affects the interaction with host CCNT1. Acetylation by EP300, CREBBP, GCN5L2/GCN5 and PCAF regulates the transactivation activity of Tat. EP300-mediated acetylation of Lys-50 promotes dissociation of Tat from the TAR RNA through the competitive binding to PCAF's bromodomain. In addition, the non-acetylated Tat's N-terminus can also interact with PCAF. PCAF-mediated acetylation of Lys-28 enhances Tat's binding to CCNT1. Lys-50 is deacetylated by SIRT1. Post-translationally, polyubiquitination by host MDM2 does not target Tat to degradation, but activates its transactivation function and fosters interaction with CCNT1 and TAR RNA. In terms of processing, phosphorylated by EIF2AK2 on serine and threonine residues adjacent to the basic region important for TAR RNA binding and function. Phosphorylation of Tat by EIF2AK2 is dependent on the prior activation of EIF2AK2 by dsRNA.

It is found in the host nucleus. It localises to the host nucleolus. The protein resides in the host cytoplasm. Its subcellular location is the secreted. Its function is as follows. Transcriptional activator that increases RNA Pol II processivity, thereby increasing the level of full-length viral transcripts. Recognizes a hairpin structure at the 5'-LTR of the nascent viral mRNAs referred to as the transactivation responsive RNA element (TAR) and recruits the cyclin T1-CDK9 complex (P-TEFb complex) that will in turn hyperphosphorylate the RNA polymerase II to allow efficient elongation. The CDK9 component of P-TEFb and other Tat-activated kinases hyperphosphorylate the C-terminus of RNA Pol II that becomes stabilized and much more processive. Other factors such as HTATSF1/Tat-SF1, SUPT5H/SPT5, and HTATIP2 are also important for Tat's function. Besides its effect on RNA Pol II processivity, Tat induces chromatin remodeling of proviral genes by recruiting the histone acetyltransferases (HATs) CREBBP, EP300 and PCAF to the chromatin. This also contributes to the increase in proviral transcription rate, especially when the provirus integrates in transcriptionally silent region of the host genome. To ensure maximal activation of the LTR, Tat mediates nuclear translocation of NF-kappa-B by interacting with host RELA. Through its interaction with host TBP, Tat may also modulate transcription initiation. Tat can reactivate a latently infected cell by penetrating in it and transactivating its LTR promoter. In the cytoplasm, Tat is thought to act as a translational activator of HIV-1 mRNAs. Extracellular circulating Tat can be endocytosed by surrounding uninfected cells via the binding to several surface receptors such as CD26, CXCR4, heparan sulfate proteoglycans (HSPG) or LDLR. Neurons are rarely infected, but they internalize Tat via their LDLR. Through its interaction with nuclear HATs, Tat is potentially able to control the acetylation-dependent cellular gene expression. Modulates the expression of many cellular genes involved in cell survival, proliferation or in coding for cytokines or cytokine receptors. Tat plays a role in T-cell and neurons apoptosis. Tat induced neurotoxicity and apoptosis probably contribute to neuroAIDS. Circulating Tat also acts as a chemokine-like and/or growth factor-like molecule that binds to specific receptors on the surface of the cells, affecting many cellular pathways. In the vascular system, Tat binds to ITGAV/ITGB3 and ITGA5/ITGB1 integrins dimers at the surface of endothelial cells and competes with bFGF for heparin-binding sites, leading to an excess of soluble bFGF. The polypeptide is Protein Tat (Homo sapiens (Human)).